The following is a 501-amino-acid chain: Aspartyl/glutamyl-tRNA(Asn/Gln) amidotransferase subunit B (501 aa).

This sequence belongs to the GatB/GatE family. GatB subfamily. In terms of assembly, heterotrimer of A, B and C subunits.

It catalyses the reaction L-glutamyl-tRNA(Gln) + L-glutamine + ATP + H2O = L-glutaminyl-tRNA(Gln) + L-glutamate + ADP + phosphate + H(+). The catalysed reaction is L-aspartyl-tRNA(Asn) + L-glutamine + ATP + H2O = L-asparaginyl-tRNA(Asn) + L-glutamate + ADP + phosphate + 2 H(+). Functionally, allows the formation of correctly charged Asn-tRNA(Asn) or Gln-tRNA(Gln) through the transamidation of misacylated Asp-tRNA(Asn) or Glu-tRNA(Gln) in organisms which lack either or both of asparaginyl-tRNA or glutaminyl-tRNA synthetases. The reaction takes place in the presence of glutamine and ATP through an activated phospho-Asp-tRNA(Asn) or phospho-Glu-tRNA(Gln). The protein is Aspartyl/glutamyl-tRNA(Asn/Gln) amidotransferase subunit B of Mycobacterium sp. (strain KMS).